The following is a 309-amino-acid chain: Chronophin (309 aa).

Catalysis depends on Asp25, which acts as the Nucleophile. 2 residues coordinate Mg(2+): Asp25 and Asp27. Asp27 acts as the Proton donor in catalysis. Substrate-binding positions include 58–60 (SNN), His178, and Lys209. Mg(2+) is bound at residue Asp234.

It belongs to the HAD-like hydrolase superfamily. As to quaternary structure, homodimer. Requires Mg(2+) as cofactor.

The protein localises to the cytoplasm. Its subcellular location is the cytosol. The protein resides in the cytoskeleton. It localises to the cell projection. It is found in the ruffle membrane. The protein localises to the lamellipodium membrane. Its subcellular location is the cell membrane. It carries out the reaction pyridoxal 5'-phosphate + H2O = pyridoxal + phosphate. The catalysed reaction is pyridoxine 5'-phosphate + H2O = pyridoxine + phosphate. The enzyme catalyses pyridoxamine + phosphate = pyridoxamine 5'-phosphate + H2O. It catalyses the reaction O-phospho-L-seryl-[protein] + H2O = L-seryl-[protein] + phosphate. In terms of biological role, functions as a pyridoxal phosphate (PLP) phosphatase, which also catalyzes the dephosphorylation of pyridoxine 5'-phosphate (PNP) and pyridoxamine 5'-phosphate (PMP), with order of substrate preference PLP &gt; PNP &gt; PMP and therefore plays a role in vitamin B6 metabolism. Also functions as a protein serine phosphatase that specifically dephosphorylates 'Ser-3' in proteins of the actin-depolymerizing factor (ADF)/cofilin family like CFL1 and DSTN. Thereby, regulates cofilin-dependent actin cytoskeleton reorganization, being required for normal progress through mitosis and normal cytokinesis. Does not dephosphorylate phosphothreonines in LIMK1. Does not dephosphorylate peptides containing phosphotyrosine. This chain is Chronophin, found in Rattus norvegicus (Rat).